The primary structure comprises 171 residues: 3-hydroxydecanoyl-[acyl-carrier-protein] dehydratase (171 aa).

Residue His70 is part of the active site.

The protein belongs to the thioester dehydratase family. FabA subfamily. Homodimer.

Its subcellular location is the cytoplasm. The catalysed reaction is a (3R)-hydroxyacyl-[ACP] = a (2E)-enoyl-[ACP] + H2O. It catalyses the reaction (3R)-hydroxydecanoyl-[ACP] = (2E)-decenoyl-[ACP] + H2O. It carries out the reaction (2E)-decenoyl-[ACP] = (3Z)-decenoyl-[ACP]. The protein operates within lipid metabolism; fatty acid biosynthesis. Its function is as follows. Necessary for the introduction of cis unsaturation into fatty acids. Catalyzes the dehydration of (3R)-3-hydroxydecanoyl-ACP to E-(2)-decenoyl-ACP and then its isomerization to Z-(3)-decenoyl-ACP. Can catalyze the dehydratase reaction for beta-hydroxyacyl-ACPs with saturated chain lengths up to 16:0, being most active on intermediate chain length. This Photobacterium profundum (strain SS9) protein is 3-hydroxydecanoyl-[acyl-carrier-protein] dehydratase.